The chain runs to 423 residues: MTTTELTGWPAPTASGRVDAVVHLPGSKSMTNRALVLAALAAEPTAIRGGLRARDTELMMAGLRSLGVGIDDAGDMWLVSPAELRGPAAIDCGLAGTVMRFLLAAATLATGEVSFDGDPRARERPLRPLLDALRQLGAELRDTGGRLPVTVVGSGHLPGGHCVVDASASSQFVSALLLVAPRADTPVTVGHVGRTLPSVPHITMTVAMLRERGVEVAGTDGSWRVQPGPIRGGTVQIEPDLSNAAPFLAAALVTGGRVRVPDWPMRTTQAGDALRDLLTAMGARCELDATGLTVTGGPVIHGLDADLRDVSELVPTLAALAALADRPSTFRGIGHMRGHETDRLAALAAELTRLGGDVTATDDGLVIRPRPLHGGVFHSYGDHRMATTGAVLGLVIPGIVVENIQTVAKTMPTFVELWTGMLR.

The 3-phosphoshikimate site is built by Lys-28, Ser-29, and Arg-33. Lys-28 lines the phosphoenolpyruvate pocket. Positions 96 and 124 each coordinate phosphoenolpyruvate. Residues Ser-169, Ser-170, Gln-171, Ser-198, Glu-312, and His-339 each contribute to the 3-phosphoshikimate site. Gln-171 provides a ligand contact to phosphoenolpyruvate. Glu-312 functions as the Proton acceptor in the catalytic mechanism. Residues Arg-343, Arg-384, and Lys-409 each coordinate phosphoenolpyruvate.

It belongs to the EPSP synthase family. In terms of assembly, monomer.

Its subcellular location is the cytoplasm. The catalysed reaction is 3-phosphoshikimate + phosphoenolpyruvate = 5-O-(1-carboxyvinyl)-3-phosphoshikimate + phosphate. Its pathway is metabolic intermediate biosynthesis; chorismate biosynthesis; chorismate from D-erythrose 4-phosphate and phosphoenolpyruvate: step 6/7. Catalyzes the transfer of the enolpyruvyl moiety of phosphoenolpyruvate (PEP) to the 5-hydroxyl of shikimate-3-phosphate (S3P) to produce enolpyruvyl shikimate-3-phosphate and inorganic phosphate. The polypeptide is 3-phosphoshikimate 1-carboxyvinyltransferase (Acidothermus cellulolyticus (strain ATCC 43068 / DSM 8971 / 11B)).